Consider the following 65-residue polypeptide: Large ribosomal subunit protein bL32 (65 aa).

The protein belongs to the bacterial ribosomal protein bL32 family.

The chain is Large ribosomal subunit protein bL32 from Metamycoplasma arthritidis (strain 158L3-1) (Mycoplasma arthritidis).